The sequence spans 437 residues: GTPase Obg (437 aa).

The 159-residue stretch at 2 to 160 (SMFLDTAKIS…RELQLELKIL (159 aa)) folds into the Obg domain. One can recognise an OBG-type G domain in the interval 161-338 (ADVGLVGFPS…LMDATAELLA (178 aa)). GTP is bound by residues 167–174 (GFPSVGKS), 192–196 (FTTIV), 214–217 (DLPG), 284–287 (NKMD), and 319–321 (SSL). Mg(2+) contacts are provided by Ser174 and Thr194. The OCT domain occupies 359–437 (GFNEDERPFE…IGNFEFEFVD (79 aa)).

Belongs to the TRAFAC class OBG-HflX-like GTPase superfamily. OBG GTPase family. As to quaternary structure, monomer. Mg(2+) is required as a cofactor.

It localises to the cytoplasm. Functionally, an essential GTPase which binds GTP, GDP and possibly (p)ppGpp with moderate affinity, with high nucleotide exchange rates and a fairly low GTP hydrolysis rate. Plays a role in control of the cell cycle, stress response, ribosome biogenesis and in those bacteria that undergo differentiation, in morphogenesis control. This is GTPase Obg from Streptococcus agalactiae serotype Ia (strain ATCC 27591 / A909 / CDC SS700).